Consider the following 224-residue polypeptide: Small ribosomal subunit protein uS3 (224 aa).

A KH type-2 domain is found at 39-107 (IREFLKKKPS…DVWVEIAEVK (69 aa)).

The protein belongs to the universal ribosomal protein uS3 family. In terms of assembly, part of the 30S ribosomal subunit. Forms a tight complex with proteins S10 and S14.

Its function is as follows. Binds the lower part of the 30S subunit head. Binds mRNA in the 70S ribosome, positioning it for translation. The chain is Small ribosomal subunit protein uS3 from Chlamydia trachomatis serovar A (strain ATCC VR-571B / DSM 19440 / HAR-13).